The sequence spans 78 residues: Apolipoprotein C-I (78 aa).

Positions methionine 1–glycine 26 are cleaved as a signal peptide.

This sequence belongs to the apolipoprotein C1 family.

It is found in the secreted. Functionally, inhibitor of lipoprotein binding to the low density lipoprotein (LDL) receptor, LDL receptor-related protein, and very low density lipoprotein (VLDL) receptor. Associates with high density lipoproteins (HDL) and the triacylglycerol-rich lipoproteins in the plasma and makes up about 10% of the protein of the VLDL and 2% of that of HDL. Appears to interfere directly with fatty acid uptake and is also the major plasma inhibitor of cholesteryl ester transfer protein (CETP). Binds free fatty acids and reduces their intracellular esterification. Modulates the interaction of APOE with beta-migrating VLDL and inhibits binding of beta-VLDL to the LDL receptor-related protein. This Puma concolor (Mountain lion) protein is Apolipoprotein C-I (APOC1).